The chain runs to 38 residues: MKVRPSVKKICDKCKVVRRRGVVRIICENPRHKQRQGN.

This sequence belongs to the bacterial ribosomal protein bL36 family.

The polypeptide is Large ribosomal subunit protein bL36 (Sorangium cellulosum (strain So ce56) (Polyangium cellulosum (strain So ce56))).